We begin with the raw amino-acid sequence, 218 residues long: DNA-directed RNA polymerase III subunit RPC7-like (218 aa).

Residues 130–218 form a disordered region; that stretch reads TIILPKRPPK…SDDNMDEAIY (89 aa). Residues 139-160 are compositionally biased toward basic and acidic residues; that stretch reads KSTDDKEETIQKLETLEKKEEE. Composition is skewed to acidic residues over residues 161-193 and 201-218; these read VTSE…EETD and NGED…EAIY.

Belongs to the eukaryotic RPC7 RNA polymerase subunit family. As to quaternary structure, component of the RNA polymerase III (Pol III) complex consisting of 17 subunits. Pol III exists as two alternative complexes defined by the mutually exclusive incorporation of subunit POLR3G/RPC7alpha or POLR3GL/RPC7beta. Found in a trimeric complex with POLR3C/RPC3 and POLR3F/RPC6. Directly interacts with POLR3C. Expressed in the liver.

It is found in the nucleus. Its function is as follows. DNA-dependent RNA polymerase catalyzes the transcription of DNA into RNA using the four ribonucleoside triphosphates as substrates. Specific peripheric component of RNA polymerase III which synthesizes small RNAs, such as 5S rRNA and tRNAs. In Mus musculus (Mouse), this protein is DNA-directed RNA polymerase III subunit RPC7-like.